A 67-amino-acid chain; its full sequence is Putative antitoxin PF1308 (67 aa).

This sequence belongs to the UPF0165 family.

Functionally, possibly the antitoxin component of a type II toxin-antitoxin (TA) system. In Pyrococcus furiosus (strain ATCC 43587 / DSM 3638 / JCM 8422 / Vc1), this protein is Putative antitoxin PF1308.